The chain runs to 226 residues: 2-C-methyl-D-erythritol 4-phosphate cytidylyltransferase (226 aa).

It belongs to the IspD/TarI cytidylyltransferase family. IspD subfamily.

The catalysed reaction is 2-C-methyl-D-erythritol 4-phosphate + CTP + H(+) = 4-CDP-2-C-methyl-D-erythritol + diphosphate. Its pathway is isoprenoid biosynthesis; isopentenyl diphosphate biosynthesis via DXP pathway; isopentenyl diphosphate from 1-deoxy-D-xylulose 5-phosphate: step 2/6. In terms of biological role, catalyzes the formation of 4-diphosphocytidyl-2-C-methyl-D-erythritol from CTP and 2-C-methyl-D-erythritol 4-phosphate (MEP). The sequence is that of 2-C-methyl-D-erythritol 4-phosphate cytidylyltransferase from Parasynechococcus marenigrum (strain WH8102).